The primary structure comprises 585 residues: Arginine--tRNA ligase (585 aa).

The 'HIGH' region signature appears at 126–136; that stretch reads PNIAKEMHVGH.

Belongs to the class-I aminoacyl-tRNA synthetase family. As to quaternary structure, monomer.

The protein localises to the cytoplasm. It carries out the reaction tRNA(Arg) + L-arginine + ATP = L-arginyl-tRNA(Arg) + AMP + diphosphate. The polypeptide is Arginine--tRNA ligase (Crocosphaera subtropica (strain ATCC 51142 / BH68) (Cyanothece sp. (strain ATCC 51142))).